We begin with the raw amino-acid sequence, 242 residues long: Glutathione S-transferase 3 (242 aa).

The GST N-terminal domain occupies 1–79 (MIVLHHLKNS…HLVRKYGPSF (79 aa)). In terms of domain architecture, GST C-terminal spans 85 to 234 (DVAELEKYEL…ERYSHPPTPP (150 aa)). Ser228 carries the post-translational modification Phosphoserine. Thr232 is subject to Phosphothreonine.

This sequence belongs to the GST superfamily. Interacts with sad1.

It is found in the cytoplasm. The enzyme catalyses RX + glutathione = an S-substituted glutathione + a halide anion + H(+). In terms of biological role, may have a role in the detoxification of various heavy metals. This is Glutathione S-transferase 3 (gst3) from Schizosaccharomyces pombe (strain 972 / ATCC 24843) (Fission yeast).